Consider the following 212-residue polypeptide: MQLFHLCLIIFCSCPTVQASKLCLGWLWGMDIDPYKEFGASVELLSFLPSDFFPSVRDLLDTASALYRDALESPEHCTPNHTALRQAILCWGELMTLASWVGNNLEDPAARDLVVNYVNTNMGLKIRQLLWFHISCLTFGRETVLEYLVSFGVWIRTPPAYRPPNAPILSTLPETTVVRRRGRSPRRRTPSPRRRRSQSPRRRRSQSPASQC.

An N-terminal signal peptide occupies residues 1–19; the sequence is MQLFHLCLIIFCSCPTVQA. The HBEAG stretch occupies residues 25–27; that stretch reads GWL. Positions 165–212 are disordered; sequence NAPILSTLPETTVVRRRGRSPRRRTPSPRRRRSQSPRRRRSQSPASQC. Residues 178–205 show a composition bias toward basic residues; the sequence is VRRRGRSPRRRTPSPRRRRSQSPRRRRS. Repeat copies occupy residues 184–190, 191–198, and 199–206. The tract at residues 184 to 206 is 3 X 8 AA repeats of S-P-R-R-R-R-S-Q; that stretch reads SPRRRTPSPRRRRSQSPRRRRSQ. Positions 184-212 are excised as a propeptide; that stretch reads SPRRRTPSPRRRRSQSPRRRRSQSPASQC.

It belongs to the orthohepadnavirus precore antigen family. As to quaternary structure, homodimerizes. In terms of processing, phosphorylated. Post-translationally, cleaved by host furin.

The protein localises to the secreted. Its subcellular location is the host nucleus. May regulate immune response to the intracellular capsid in acting as a T-cell tolerogen, by having an immunoregulatory effect which prevents destruction of infected cells by cytotoxic T-cells. This immune regulation may predispose to chronicity during perinatal infections and prevent severe liver injury during adult infections. The polypeptide is External core antigen (Hepatitis B virus genotype F2 (isolate Brazil/w4B) (HBV-F)).